A 247-amino-acid polypeptide reads, in one-letter code: Complement C1q subcomponent subunit A (247 aa).

The signal sequence occupies residues 1–24 (MEAPRGWLVIMISVLAVSLASSAA). The disordered stretch occupies residues 26 to 116 (DTCRDLDGRD…NPGNIKDQRR (91 aa)). Over residues 27–38 (TCRDLDGRDGAA) the composition is skewed to basic and acidic residues. One can recognise a Collagen-like domain in the interval 33-111 (GRDGAARKPG…KGIKGNPGNI (79 aa)). Pro-41 and Pro-47 each carry 4-hydroxyproline. Residue Lys-50 is modified to 5-hydroxylysine. Lys-50 is a glycosylation site (O-linked (Gal...) hydroxylysine). 4-hydroxyproline occurs at positions 56 and 59. Lys-69 carries the 5-hydroxylysine modification. Lys-69 carries an O-linked (Gal...) hydroxylysine glycan. 4-hydroxyproline occurs at positions 81 and 87. Low complexity predominate over residues 98–109 (LPGLKGIKGNPG). Lys-102 carries the post-translational modification 5-hydroxylysine. An O-linked (Gal...) hydroxylysine glycan is attached at Lys-102. Residues 112-247 (KDQRRPAFSA…FSGFLIFPST (136 aa)) form the C1q domain. A disulfide bridge connects residues Cys-174 and Cys-192. Gln-201 serves as a coordination point for Ca(2+).

In terms of assembly, core component of the complement C1 complex, a calcium-dependent complex composed of 1 molecule of the C1Q subcomplex, 2 molecules of C1R and 2 molecules of C1S. The C1Q subcomplex is composed 18 subunits: 3 chains of C1QA, C1QB, and C1QC trimerize to form 6 collagen-like triple helices connected to six globular ligand-recognition modules (C1q domain). Interacts with CR1 (via Sushi 24 and Sushi 25 domains). Interacts (via C-terminus) with CD33; this interaction activates CD33 inhibitory motifs. Post-translationally, O-linked glycans are assumed to be the Glc-Gal disaccharides typically found as secondary modifications of hydroxylated lysines in collagen-like domains.

It is found in the secreted. The protein resides in the cell surface. The C1Q subcomplex is inhibited by sulfated molecules, such as triterpenoid sulfates, heparan sulfate, or chondroitin sulfates. Functionally, core component of the complement C1 complex, a multiprotein complex that initiates the classical pathway of the complement system, a cascade of proteins that leads to phagocytosis and breakdown of pathogens and signaling that strengthens the adaptive immune system. The classical complement pathway is initiated by the C1Q subcomplex of the C1 complex, which specifically binds IgG or IgM immunoglobulins complexed with antigens, forming antigen-antibody complexes on the surface of pathogens: C1QA, together with C1QB and C1QC, specifically recognizes and binds the Fc regions of IgG or IgM via its C1q domain. Immunoglobulin-binding activates the proenzyme C1R, which cleaves C1S, initiating the proteolytic cascade of the complement system. The C1Q subcomplex is activated by a hexamer of IgG complexed with antigens, while it is activated by a pentameric IgM. The C1Q subcomplex also recognizes and binds phosphatidylserine exposed on the surface of cells undergoing programmed cell death, possibly promoting activation of the complement system. The protein is Complement C1q subcomponent subunit A (C1QA) of Sus scrofa (Pig).